The sequence spans 320 residues: Cytochrome f (320 aa).

Residues 1-35 form the signal peptide; that stretch reads MRNINTYDWMKKWMTRSISILVMIHMITRTSISNA. Heme contacts are provided by Y36, C56, C59, and H60. A helical transmembrane segment spans residues 286–306; it reads VQGLLLLLASVILAQIFLVLK.

This sequence belongs to the cytochrome f family. As to quaternary structure, the 4 large subunits of the cytochrome b6-f complex are cytochrome b6, subunit IV (17 kDa polypeptide, petD), cytochrome f and the Rieske protein, while the 4 small subunits are PetG, PetL, PetM and PetN. The complex functions as a dimer. It depends on heme as a cofactor.

The protein localises to the plastid. It localises to the chloroplast thylakoid membrane. Component of the cytochrome b6-f complex, which mediates electron transfer between photosystem II (PSII) and photosystem I (PSI), cyclic electron flow around PSI, and state transitions. The protein is Cytochrome f of Cycas taitungensis (Prince sago).